The sequence spans 149 residues: 3-dehydroquinate dehydratase (149 aa).

The Proton acceptor role is filled by Tyr-24. Residues Asn-75, His-81, and Asp-88 each contribute to the substrate site. His-101 (proton donor) is an active-site residue. Substrate contacts are provided by residues 102–103 and Arg-112; that span reads LS.

Belongs to the type-II 3-dehydroquinase family. As to quaternary structure, homododecamer.

The catalysed reaction is 3-dehydroquinate = 3-dehydroshikimate + H2O. Its pathway is metabolic intermediate biosynthesis; chorismate biosynthesis; chorismate from D-erythrose 4-phosphate and phosphoenolpyruvate: step 3/7. Catalyzes a trans-dehydration via an enolate intermediate. This is 3-dehydroquinate dehydratase from Bartonella tribocorum (strain CIP 105476 / IBS 506).